Here is a 256-residue protein sequence, read N- to C-terminus: 1-(5-phosphoribosyl)-5-[(5-phosphoribosylamino)methylideneamino] imidazole-4-carboxamide isomerase (256 aa).

D8 functions as the Proton acceptor in the catalytic mechanism. D130 (proton donor) is an active-site residue.

Belongs to the HisA/HisF family.

The protein resides in the cytoplasm. It catalyses the reaction 1-(5-phospho-beta-D-ribosyl)-5-[(5-phospho-beta-D-ribosylamino)methylideneamino]imidazole-4-carboxamide = 5-[(5-phospho-1-deoxy-D-ribulos-1-ylimino)methylamino]-1-(5-phospho-beta-D-ribosyl)imidazole-4-carboxamide. The protein operates within amino-acid biosynthesis; L-histidine biosynthesis; L-histidine from 5-phospho-alpha-D-ribose 1-diphosphate: step 4/9. This is 1-(5-phosphoribosyl)-5-[(5-phosphoribosylamino)methylideneamino] imidazole-4-carboxamide isomerase from Chlorobium phaeobacteroides (strain DSM 266 / SMG 266 / 2430).